Consider the following 416-residue polypeptide: UDP-N-acetylglucosamine 1-carboxyvinyltransferase (416 aa).

Residue 22 to 23 (KN) coordinates phosphoenolpyruvate. Arg-92 is a UDP-N-acetyl-alpha-D-glucosamine binding site. The active-site Proton donor is the Cys-116. Position 116 is a 2-(S-cysteinyl)pyruvic acid O-phosphothioketal (Cys-116). UDP-N-acetyl-alpha-D-glucosamine contacts are provided by residues 121-125 (RPVDQ), Asp-304, and Ile-326.

This sequence belongs to the EPSP synthase family. MurA subfamily.

Its subcellular location is the cytoplasm. The catalysed reaction is phosphoenolpyruvate + UDP-N-acetyl-alpha-D-glucosamine = UDP-N-acetyl-3-O-(1-carboxyvinyl)-alpha-D-glucosamine + phosphate. The protein operates within cell wall biogenesis; peptidoglycan biosynthesis. In terms of biological role, cell wall formation. Adds enolpyruvyl to UDP-N-acetylglucosamine. This is UDP-N-acetylglucosamine 1-carboxyvinyltransferase from Janthinobacterium sp. (strain Marseille) (Minibacterium massiliensis).